We begin with the raw amino-acid sequence, 165 residues long: Large ribosomal subunit protein uL10 (165 aa).

It belongs to the universal ribosomal protein uL10 family. As to quaternary structure, part of the ribosomal stalk of the 50S ribosomal subunit. The N-terminus interacts with L11 and the large rRNA to form the base of the stalk. The C-terminus forms an elongated spine to which L12 dimers bind in a sequential fashion forming a multimeric L10(L12)X complex.

Forms part of the ribosomal stalk, playing a central role in the interaction of the ribosome with GTP-bound translation factors. The protein is Large ribosomal subunit protein uL10 of Mycoplasma mycoides subsp. mycoides SC (strain CCUG 32753 / NCTC 10114 / PG1).